Here is a 511-residue protein sequence, read N- to C-terminus: Adenosine deaminase 2 (511 aa).

An N-terminal signal peptide occupies residues 1–29; the sequence is MLVDGPSERPALCFLLLAVAMSFFGSALS. The dimerization stretch occupies residues 30–100; the sequence is IDETRAHLLL…HLIERSQVFN (71 aa). The Zn(2+) site is built by His112 and His114. Asp115 contributes to the substrate binding site. An N-linked (GlcNAc...) asparagine glycan is attached at Asn127. A PRB domain region spans residues 127-185; sequence NVTYRPHCHICFTPRGIMQFRFAHPTPRPSEKCSKWILLEDYRKRVQNVTEFDDSLLRN. A disulfide bridge links Cys137 with Cys159. N-linked (GlcNAc...) asparagine glycosylation is found at Asn174 and Asn185. Residues 204-211, His293, and Gly326 each bind substrate; that span reads WSKFETIF. His356 contacts Zn(2+). Residue Glu359 is the Proton donor of the active site. Asn378 is a glycosylation site (N-linked (GlcNAc...) asparagine). His384 serves as the catalytic Proton acceptor. Asp441 is a Zn(2+) binding site. Asp442 is a binding site for substrate.

The protein belongs to the metallo-dependent hydrolases superfamily. Adenosine and AMP deaminases family. ADGF subfamily. Homodimer. Interacts with adenosine receptors. Binds heparin. The cofactor is Zn(2+). In terms of tissue distribution, detected in blood plasma (at protein level). Widely expressed, with most abundant expression in human adult heart, lung, lymphoblasts, and placenta as well as fetal lung, liver, and kidney. In embryo, expressed in the outflow tract and atrium of the developing heart, the VII/VIII cranial nerve ganglion, and the notochord.

It localises to the secreted. It carries out the reaction adenosine + H2O + H(+) = inosine + NH4(+). Adenosine deaminase that may contribute to the degradation of extracellular adenosine, a signaling molecule that controls a variety of cellular responses. Requires elevated adenosine levels for optimal enzyme activity. Binds to cell surfaces via proteoglycans and may play a role in the regulation of cell proliferation and differentiation, independently of its enzyme activity. The sequence is that of Adenosine deaminase 2 from Homo sapiens (Human).